The sequence spans 536 residues: Protein ST7 homolog (536 aa).

The next 2 helical transmembrane spans lie at 3–23 (CSWT…LFFL) and 49–69 (FYVA…IFEW). The stretch at 192-219 (AEEDTETVAQAENVLRRALRAIENTLST) forms a coiled coil. A helical transmembrane segment spans residues 464 to 484 (STLGMLIQTFACLAICILAVL).

This sequence belongs to the ST7 family.

It is found in the membrane. The chain is Protein ST7 homolog from Caenorhabditis briggsae.